The following is a 572-amino-acid chain: MTTASQQTSSHSTASSTSRKGNNNDATPSLKELQLANRTLGTRNAKLVEMLKASRDKLDALNEQIRALSDPPSTYGTLLELNPGGHSAEVFTSNRRMRLVVAPGVDTSQLTPGALVRLGEGQEVVEHCGFSDFGDIAVVKEFLPGGSRVVVADTMGDLRVLKIAAPLYELWSQKNVGAGDQVLVDYRAGYAFESIPKADVENLILEEIPEVSYEDIGGLHNQIEMIHDAVELPFTHPDLYRKFDLQPPKGVLLYGPPGCGKTLIAKAVAHSLAEKMGSGGESYFLNIKGPELLNKFVGETERQIRQIFDRARSIAEDGRPVIVFFDEMDAIFRTRGSGISSDLENTVVPQLLSEIDGVEDLRNVIVIGASNREEMIDPAILRPGRLDVKIRVERPDEKSAREIAELYLVDTLPLDPALVEETGDRHAAVAALIDELSSRMYAQHSDNEFVELTFVDGSREVLYYRDFASGAMIANIVDRAKKNALKRALASGQPDNHGVSLEDVRTAVDQEFAENDDLPNTANPDEWARISGRTGQRVTEVTVAHHNRKTTTETEATEPEGTDSGKGHTDAS.

The span at 1–18 (MTTASQQTSSHSTASSTS) shows a compositional bias: low complexity. Residues 1–30 (MTTASQQTSSHSTASSTSRKGNNNDATPSL) are disordered. Positions 42 to 70 (TRNAKLVEMLKASRDKLDALNEQIRALSD) form a coiled coil. 258-263 (GCGKTL) lines the ATP pocket. The segment at 543–572 (VAHHNRKTTTETEATEPEGTDSGKGHTDAS) is disordered. A compositionally biased stretch (basic and acidic residues) spans 563–572 (DSGKGHTDAS).

Belongs to the AAA ATPase family. Homohexamer. Assembles into a hexameric ring structure.

This chain is AAA ATPase forming ring-shaped complexes, found in Corynebacterium kroppenstedtii (strain DSM 44385 / JCM 11950 / CIP 105744 / CCUG 35717).